Here is a 54-residue protein sequence, read N- to C-terminus: Large ribosomal subunit protein bL33 (54 aa).

Belongs to the bacterial ribosomal protein bL33 family.

This Chloroflexus aurantiacus (strain ATCC 29366 / DSM 635 / J-10-fl) protein is Large ribosomal subunit protein bL33.